The primary structure comprises 105 residues: Fluoride-specific ion channel FluC (105 aa).

Helical transmembrane passes span 14–34 (FPLP…VFVV), 44–64 (LSPL…AFSL), and 79–99 (ALYV…GLWL). Na(+)-binding residues include Gly-54 and Thr-57.

This sequence belongs to the fluoride channel Fluc/FEX (TC 1.A.43) family.

It localises to the cell inner membrane. It carries out the reaction fluoride(in) = fluoride(out). With respect to regulation, na(+) is not transported, but it plays an essential structural role and its presence is essential for fluoride channel function. Its function is as follows. Fluoride-specific ion channel. Important for reducing fluoride concentration in the cell, thus reducing its toxicity. This is Fluoride-specific ion channel FluC from Jannaschia sp. (strain CCS1).